Consider the following 402-residue polypeptide: Alanine racemase (402 aa).

The Proton acceptor; specific for D-alanine role is filled by K34. N6-(pyridoxal phosphate)lysine is present on K34. Substrate is bound at residue R133. An RPE1 insert domain is found at 226–271; that stretch reads EVSYNLSYKEKFERNTPALATTVCINKCADVNTRLTYKVPLKGSYR. Catalysis depends on Y296, which acts as the Proton acceptor; specific for L-alanine. M344 is a binding site for substrate.

The protein belongs to the alanine racemase family. Pyridoxal 5'-phosphate serves as cofactor.

It catalyses the reaction L-alanine = D-alanine. Its pathway is amino-acid biosynthesis; D-alanine biosynthesis; D-alanine from L-alanine: step 1/1. Its function is as follows. Catalyzes the interconversion of L-alanine and D-alanine. May also act on other amino acids. The chain is Alanine racemase (alr) from Rickettsia typhi (strain ATCC VR-144 / Wilmington).